Consider the following 360-residue polypeptide: Photosystem II protein D1 (360 aa).

3 consecutive transmembrane segments (helical) span residues 29–46 (YVGW…TATT), 118–133 (HFLL…QWEL), and 142–156 (WICV…AATA). H118 contributes to the chlorophyll a binding site. Y126 lines the pheophytin a pocket. D170 and E189 together coordinate [CaMn4O5] cluster. The helical transmembrane segment at 197-218 (FHMLGVAGVFGGSLFSAMHGSL) threads the bilayer. Residue H198 coordinates chlorophyll a. Residues H215 and 264 to 265 (SF) each bind a quinone. H215 lines the Fe cation pocket. H272 provides a ligand contact to Fe cation. A helical membrane pass occupies residues 274–288 (FLGAWPVIGIWFTAM). [CaMn4O5] cluster-binding residues include H332, E333, D342, and A344. Positions 345 to 360 (SGEQAPVALTAPAING) are excised as a propeptide.

It belongs to the reaction center PufL/M/PsbA/D family. In terms of assembly, PSII is composed of 1 copy each of membrane proteins PsbA, PsbB, PsbC, PsbD, PsbE, PsbF, PsbH, PsbI, PsbJ, PsbK, PsbL, PsbM, PsbT, PsbX, PsbY, PsbZ, Psb30/Ycf12, peripheral proteins PsbO, CyanoQ (PsbQ), PsbU, PsbV and a large number of cofactors. It forms dimeric complexes. The cofactor is The D1/D2 heterodimer binds P680, chlorophylls that are the primary electron donor of PSII, and subsequent electron acceptors. It shares a non-heme iron and each subunit binds pheophytin, quinone, additional chlorophylls, carotenoids and lipids. D1 provides most of the ligands for the Mn4-Ca-O5 cluster of the oxygen-evolving complex (OEC). There is also a Cl(-1) ion associated with D1 and D2, which is required for oxygen evolution. The PSII complex binds additional chlorophylls, carotenoids and specific lipids.. Tyr-161 forms a radical intermediate that is referred to as redox-active TyrZ, YZ or Y-Z. In terms of processing, C-terminally processed by CtpA; processing is essential to allow assembly of the oxygen-evolving complex and thus photosynthetic growth.

The protein resides in the cellular thylakoid membrane. It carries out the reaction 2 a plastoquinone + 4 hnu + 2 H2O = 2 a plastoquinol + O2. Photosystem II (PSII) is a light-driven water:plastoquinone oxidoreductase that uses light energy to abstract electrons from H(2)O, generating O(2) and a proton gradient subsequently used for ATP formation. It consists of a core antenna complex that captures photons, and an electron transfer chain that converts photonic excitation into a charge separation. The D1/D2 (PsbA/PsbD) reaction center heterodimer binds P680, the primary electron donor of PSII as well as several subsequent electron acceptors. The protein is Photosystem II protein D1 of Microcystis aeruginosa.